The primary structure comprises 327 residues: Acetyl-coenzyme A carboxylase carboxyl transferase subunit alpha (327 aa).

Positions 46–299 (LEARAIQLRR…RQVLLRHLKD (254 aa)) constitute a CoA carboxyltransferase C-terminal domain.

The protein belongs to the AccA family. In terms of assembly, acetyl-CoA carboxylase is a heterohexamer composed of biotin carboxyl carrier protein (AccB), biotin carboxylase (AccC) and two subunits each of ACCase subunit alpha (AccA) and ACCase subunit beta (AccD).

It is found in the cytoplasm. It catalyses the reaction N(6)-carboxybiotinyl-L-lysyl-[protein] + acetyl-CoA = N(6)-biotinyl-L-lysyl-[protein] + malonyl-CoA. Its pathway is lipid metabolism; malonyl-CoA biosynthesis; malonyl-CoA from acetyl-CoA: step 1/1. Functionally, component of the acetyl coenzyme A carboxylase (ACC) complex. First, biotin carboxylase catalyzes the carboxylation of biotin on its carrier protein (BCCP) and then the CO(2) group is transferred by the carboxyltransferase to acetyl-CoA to form malonyl-CoA. The protein is Acetyl-coenzyme A carboxylase carboxyl transferase subunit alpha of Synechococcus elongatus (strain ATCC 33912 / PCC 7942 / FACHB-805) (Anacystis nidulans R2).